We begin with the raw amino-acid sequence, 421 residues long: Phosphatidylinositol 5-phosphate 4-kinase type-2 gamma (421 aa).

Ala-2 is modified (N-acetylalanine). At Ser-26 the chain carries Phosphoserine. Residues 43 to 420 form the PIPK domain; that stretch reads AADPLVGVFL…RFLDFITNIF (378 aa). Residues 69 to 75 are required for interaction with PIP5K1A; that stretch reads VMLLPDD. Residue Ser-349 is modified to Phosphoserine.

Interacts with PIP5K1A; the interaction inhibits PIP5K1A kinase activity. In terms of processing, phosphorylated, phosphorylation is induced by EGF.

The protein localises to the endoplasmic reticulum. The protein resides in the cytoplasm. The catalysed reaction is a 1,2-diacyl-sn-glycero-3-phospho-(1D-myo-inositol-5-phosphate) + ATP = a 1,2-diacyl-sn-glycero-3-phospho-(1D-myo-inositol-4,5-bisphosphate) + ADP + H(+). It carries out the reaction 1,2-dihexadecanoyl-sn-glycero-3-phospho-(1D-myo-inositol-5-phosphate) + ATP = 1,2-dihexadecanoyl-sn-glycero-3-phospho-(1D-myo-inositol-4,5-bisphosphate) + ADP + H(+). It catalyses the reaction 1,2-dihexadecanoyl-sn-glycero-3-phospho-(1D-myo-inositol-5-phosphate) + GTP = 1,2-dihexadecanoyl-sn-glycero-3-phospho-(1D-myo-inositol-4,5-bisphosphate) + GDP + H(+). Phosphatidylinositol 5-phosphate 4-kinase with low enzymatic activity. May be a GTP sensor, has higher GTP-dependent kinase activity than ATP-dependent kinase activity. PIP4Ks negatively regulate insulin signaling through a catalytic-independent mechanism. They interact with PIP5Ks and suppress PIP5K-mediated PtdIns(4,5)P2 synthesis and insulin-dependent conversion to PtdIns(3,4,5)P3. This chain is Phosphatidylinositol 5-phosphate 4-kinase type-2 gamma, found in Homo sapiens (Human).